Reading from the N-terminus, the 359-residue chain is GDSL esterase/lipase At5g03610 (359 aa).

The first 22 residues, 1-22 (MDSLIKLFFCLFIFLCTSLLFG), serve as a signal peptide directing secretion. Catalysis depends on serine 50, which acts as the Nucleophile. N-linked (GlcNAc...) asparagine glycans are attached at residues asparagine 136, asparagine 236, and asparagine 259. Active-site residues include aspartate 332 and histidine 335.

Belongs to the 'GDSL' lipolytic enzyme family.

The protein localises to the secreted. This is GDSL esterase/lipase At5g03610 from Arabidopsis thaliana (Mouse-ear cress).